Reading from the N-terminus, the 133-residue chain is Protein 7 (133 aa).

This is Protein 7 from Escherichia phage T7 (Bacteriophage T7).